The chain runs to 168 residues: Photosystem I assembly protein Ycf3 (168 aa).

TPR repeat units follow at residues 35–68, 72–105, and 120–153; these read AFAYYRDGMSAQSEGNYAEALQNYYEAMRLEIDP, SYILYNIGLIHTRNGEHTKALEYYFRALERNPFL, and GEQAIRQGDSEIAEAWFDQAAEYWKQALALTPGN.

It belongs to the Ycf3 family.

The protein localises to the plastid. Its subcellular location is the chloroplast thylakoid membrane. Its function is as follows. Essential for the assembly of the photosystem I (PSI) complex. May act as a chaperone-like factor to guide the assembly of the PSI subunits. In Morus indica (Mulberry), this protein is Photosystem I assembly protein Ycf3.